Reading from the N-terminus, the 207-residue chain is Dephospho-CoA kinase (207 aa).

The region spanning 4-203 (VIGLTGGIAS…EEGYIEKPNY (200 aa)) is the DPCK domain. 12–17 (ASGKST) lines the ATP pocket.

Belongs to the CoaE family.

It localises to the cytoplasm. It carries out the reaction 3'-dephospho-CoA + ATP = ADP + CoA + H(+). The protein operates within cofactor biosynthesis; coenzyme A biosynthesis; CoA from (R)-pantothenate: step 5/5. In terms of biological role, catalyzes the phosphorylation of the 3'-hydroxyl group of dephosphocoenzyme A to form coenzyme A. This is Dephospho-CoA kinase from Staphylococcus aureus (strain USA300).